We begin with the raw amino-acid sequence, 1087 residues long: Kinesin-like protein KIN-14F (1087 aa).

In terms of domain architecture, Calponin-homology (CH) spans 1 to 110; that stretch reads MDQGAMETLP…CILCLKGFYE (110 aa). The tract at residues 136 to 155 is disordered; that stretch reads SSPPQYGIGSESTTDESVSL. The region spanning 377-705 is the Kinesin motor domain; it reads TIRVYCRVRP…LKFAQRVASI (329 aa). 461 to 468 serves as a coordination point for ATP; it reads GQTGSGKT. A coiled-coil region spans residues 710 to 749; the sequence is ARSNKETGEIRDLKDEISSLKSAMEKKEAELEQLRSGSIR. 3 disordered regions span residues 740-858, 923-949, and 1004-1087; these read LEQL…PVSR, QGGV…FQKL, and DSTL…FMVP. 3 stretches are compositionally biased toward polar residues: residues 744–754, 780–797, and 836–856; these read RSGSIRNTTEC, PQPN…CSTG, and TDRA…NLPV. Over residues 1017–1033 the composition is skewed to polar residues; that stretch reads EPPSKSKNAQRNSSKNS. Basic and acidic residues predominate over residues 1042–1054; the sequence is YAHEDTSLVDDKP. Residues 1076 to 1087 show a composition bias toward basic residues; it reads SRSTHHARFMVP.

Belongs to the TRAFAC class myosin-kinesin ATPase superfamily. Kinesin family. KIN-14 subfamily. As to quaternary structure, interacts (via C-terminus) with VDAC3. Expressed in roots, leaves, stems and flowers (at protein level).

It localises to the cytoplasm. Its subcellular location is the cytoskeleton. The protein localises to the mitochondrion. Required for keeping the ATP levels stable and balancing the aerobic respiration pathways during seed germination at low temperature. The sequence is that of Kinesin-like protein KIN-14F from Arabidopsis thaliana (Mouse-ear cress).